Here is a 131-residue protein sequence, read N- to C-terminus: UPF0212 protein TK1194 (131 aa).

Belongs to the UPF0212 family.

This chain is UPF0212 protein TK1194, found in Thermococcus kodakarensis (strain ATCC BAA-918 / JCM 12380 / KOD1) (Pyrococcus kodakaraensis (strain KOD1)).